Consider the following 407-residue polypeptide: Protease ElaD (407 aa).

The active site involves histidine 231. The active-site Nucleophile is cysteine 317.

This sequence belongs to the peptidase C79 family.

In terms of biological role, protease that can act as an efficient and specific deubiquitinating enzyme in vitro. Does not possess desumoylating and deneddylating activities. The physiological substrate is unknown. The polypeptide is Protease ElaD (elaD) (Escherichia coli O157:H7).